Reading from the N-terminus, the 141-residue chain is Putative 8-oxo-dGTP diphosphatase 2 (141 aa).

Residues leucine 2–asparagine 131 enclose the Nudix hydrolase domain. Mg(2+)-binding residues include glycine 37, glutamate 52, glutamate 55, and glutamate 56. Positions glycine 37 to glycine 58 match the Nudix box motif.

Belongs to the Nudix hydrolase family. It depends on Mg(2+) as a cofactor. Mn(2+) is required as a cofactor.

It catalyses the reaction 8-oxo-dGTP + H2O = 8-oxo-dGMP + diphosphate + H(+). Functionally, may be involved in the GO system responsible for removing an oxidatively damaged form of guanine (7,8-dihydro-8-oxoguanine, 8-oxo-dGTP) from DNA and the nucleotide pool. 8-oxo-dGTP is inserted opposite dA and dC residues of template DNA with almost equal efficiency thus leading to A.T to G.C transversions. MutT specifically degrades 8-oxo-dGTP to the monophosphate. This chain is Putative 8-oxo-dGTP diphosphatase 2 (mutT2), found in Mycobacterium tuberculosis (strain CDC 1551 / Oshkosh).